Here is a 165-residue protein sequence, read N- to C-terminus: Crossover junction endodeoxyribonuclease RuvC (165 aa).

Residues aspartate 7, glutamate 67, and aspartate 140 contribute to the active site. Positions 7, 67, and 140 each coordinate Mg(2+).

The protein belongs to the RuvC family. Homodimer which binds Holliday junction (HJ) DNA. The HJ becomes 2-fold symmetrical on binding to RuvC with unstacked arms; it has a different conformation from HJ DNA in complex with RuvA. In the full resolvosome a probable DNA-RuvA(4)-RuvB(12)-RuvC(2) complex forms which resolves the HJ. It depends on Mg(2+) as a cofactor.

The protein resides in the cytoplasm. It catalyses the reaction Endonucleolytic cleavage at a junction such as a reciprocal single-stranded crossover between two homologous DNA duplexes (Holliday junction).. The RuvA-RuvB-RuvC complex processes Holliday junction (HJ) DNA during genetic recombination and DNA repair. Endonuclease that resolves HJ intermediates. Cleaves cruciform DNA by making single-stranded nicks across the HJ at symmetrical positions within the homologous arms, yielding a 5'-phosphate and a 3'-hydroxyl group; requires a central core of homology in the junction. The consensus cleavage sequence is 5'-(A/T)TT(C/G)-3'. Cleavage occurs on the 3'-side of the TT dinucleotide at the point of strand exchange. HJ branch migration catalyzed by RuvA-RuvB allows RuvC to scan DNA until it finds its consensus sequence, where it cleaves and resolves the cruciform DNA. In Dehalococcoides mccartyi (strain ATCC BAA-2266 / KCTC 15142 / 195) (Dehalococcoides ethenogenes (strain 195)), this protein is Crossover junction endodeoxyribonuclease RuvC.